Here is a 226-residue protein sequence, read N- to C-terminus: Probable transcriptional regulator RABBIT EARS (226 aa).

The C2H2-type zinc-finger motif lies at 55–77 (YSCSFCGREFKSAQALGGHMNVH). Residues 80-102 (DRARLKQQSLSPSSTDQATPPEC) are disordered. Over residues 85 to 97 (KQQSLSPSSTDQA) the composition is skewed to polar residues. An EAR-like (transcriptional repression) motif is present at residues 212-216 (LDLEL).

Strongly expressed in inflorescences and flowers, and weakly in siliques, seedlings and roots. In flowers, it is expressed in petal primordia and their precursor cells. Also expressed in the lateral root caps and the basal cells of lateral roots.

It is found in the nucleus. Functionally, probable transcriptional regulator essential for petal development. Required for the early development of the organ primordia of the second whorl. Acts downstream of AP1 and PTL. In Arabidopsis thaliana (Mouse-ear cress), this protein is Probable transcriptional regulator RABBIT EARS (RBE).